A 714-amino-acid chain; its full sequence is DNA ligase (714 aa).

NAD(+) is bound by residues 40 to 44 (DADYD), 90 to 91 (SL), and Glu-124. Residue Lys-126 is the N6-AMP-lysine intermediate of the active site. 4 residues coordinate NAD(+): Arg-147, Glu-183, Lys-304, and Lys-328. Residues Cys-420, Cys-423, Cys-438, and Cys-444 each coordinate Zn(2+). In terms of domain architecture, BRCT spans 634–714 (TRDSEVSGKT…EWAAIVAAAG (81 aa)).

It belongs to the NAD-dependent DNA ligase family. LigA subfamily. Mg(2+) serves as cofactor. Requires Mn(2+) as cofactor.

The enzyme catalyses NAD(+) + (deoxyribonucleotide)n-3'-hydroxyl + 5'-phospho-(deoxyribonucleotide)m = (deoxyribonucleotide)n+m + AMP + beta-nicotinamide D-nucleotide.. Its function is as follows. DNA ligase that catalyzes the formation of phosphodiester linkages between 5'-phosphoryl and 3'-hydroxyl groups in double-stranded DNA using NAD as a coenzyme and as the energy source for the reaction. It is essential for DNA replication and repair of damaged DNA. The chain is DNA ligase from Sphingopyxis alaskensis (strain DSM 13593 / LMG 18877 / RB2256) (Sphingomonas alaskensis).